A 125-amino-acid chain; its full sequence is Protein AC4 (125 aa).

Belongs to the geminiviridae protein AC4/C4 family.

Functionally, pathogenicity determinant. May act as a suppressor of RNA-mediated gene silencing, also known as post-transcriptional gene silencing (PTGS), a mechanism of plant viral defense that limits the accumulation of viral RNAs. This Cucurbita moschata (Winter crookneck squash) protein is Protein AC4.